We begin with the raw amino-acid sequence, 589 residues long: PTS system mannitol-specific EIICB component (589 aa).

The Cytoplasmic segment spans residues 1–25 (MEEKVSLKVRVQKLGTSLSNMVMPN). Residues 14-347 (LGTSLSNMVM…LHADKSTEDS (334 aa)) enclose the PTS EIIC type-2 domain. A helical membrane pass occupies residues 26 to 47 (IGAFIAWGVLTALFIADGYLPN). Over 48–51 (EQLA) the chain is Extracellular. The helical transmembrane segment at 52-72 (TVVGPMLTYLLPILIGYTGGY) threads the bilayer. The Cytoplasmic portion of the chain corresponds to 73–135 (MIHGQRGAVV…PGFEMLVNNF (63 aa)). A helical membrane pass occupies residues 136–157 (SAGLVGFALLLLAFYAIGPVVS). At 158 to 166 (TLTGAVGNG) the chain is on the extracellular side. Residues 167 to 187 (VEAIVNARLLPMANIIIEPAK) form a helical membrane-spanning segment. The Cytoplasmic segment spans residues 188–274 (VLFLNNALNH…VMMKPTLFLA (87 aa)). A helical transmembrane segment spans residues 275–294 (AMAGGISGTFTFQLLDAGLK). The Extracellular portion of the chain corresponds to 295–316 (SPASPGSIIAIMATAPKGVWPH). The chain crosses the membrane as a helical span at residues 317 to 338 (LNILLGVLVAAVVSFLIAALIL). At 339-589 (HADKSTEDSL…YDKMAARMYK (251 aa)) the chain is on the cytoplasmic side. The region spanning 381–476 (EKIIFACDAG…SLTGASPIAE (96 aa)) is the PTS EIIB type-2 domain. C387 serves as the catalytic Phosphocysteine intermediate; for EIIB activity. C387 is modified (phosphocysteine; by EIIA).

Homodimer.

The protein resides in the cell membrane. It carries out the reaction D-mannitol(out) + N(pros)-phospho-L-histidyl-[protein] = D-mannitol 1-phosphate(in) + L-histidyl-[protein]. The phosphoenolpyruvate-dependent sugar phosphotransferase system (sugar PTS), a major carbohydrate active transport system, catalyzes the phosphorylation of incoming sugar substrates concomitantly with their translocation across the cell membrane. The enzyme II CmtAB PTS system is involved in D-mannitol transport. This is PTS system mannitol-specific EIICB component (mtlA) from Streptococcus pneumoniae (strain ATCC BAA-255 / R6).